Consider the following 713-residue polypeptide: Phosphoribosylformylglycinamidine synthase subunit PurL (713 aa).

The active site involves His-34. ATP is bound by residues Tyr-37 and Arg-73. Mg(2+) is bound at residue Glu-75. Substrate is bound by residues 76–79 and Arg-98; that span reads SHNH. Catalysis depends on His-77, which acts as the Proton acceptor. Asp-99 contacts Mg(2+). A substrate-binding site is contributed by Gln-221. Asp-249 is a binding site for Mg(2+). 292 to 294 contributes to the substrate binding site; it reads ESQ. 2 residues coordinate ATP: Asp-474 and Gly-511. Ser-514 serves as a coordination point for substrate.

Belongs to the FGAMS family. In terms of assembly, monomer. Part of the FGAM synthase complex composed of 1 PurL, 1 PurQ and 2 PurS subunits.

It is found in the cytoplasm. It catalyses the reaction N(2)-formyl-N(1)-(5-phospho-beta-D-ribosyl)glycinamide + L-glutamine + ATP + H2O = 2-formamido-N(1)-(5-O-phospho-beta-D-ribosyl)acetamidine + L-glutamate + ADP + phosphate + H(+). It functions in the pathway purine metabolism; IMP biosynthesis via de novo pathway; 5-amino-1-(5-phospho-D-ribosyl)imidazole from N(2)-formyl-N(1)-(5-phospho-D-ribosyl)glycinamide: step 1/2. Its function is as follows. Part of the phosphoribosylformylglycinamidine synthase complex involved in the purines biosynthetic pathway. Catalyzes the ATP-dependent conversion of formylglycinamide ribonucleotide (FGAR) and glutamine to yield formylglycinamidine ribonucleotide (FGAM) and glutamate. The FGAM synthase complex is composed of three subunits. PurQ produces an ammonia molecule by converting glutamine to glutamate. PurL transfers the ammonia molecule to FGAR to form FGAM in an ATP-dependent manner. PurS interacts with PurQ and PurL and is thought to assist in the transfer of the ammonia molecule from PurQ to PurL. The polypeptide is Phosphoribosylformylglycinamidine synthase subunit PurL (Ignicoccus hospitalis (strain KIN4/I / DSM 18386 / JCM 14125)).